The chain runs to 154 residues: Aspartate carbamoyltransferase regulatory chain (154 aa).

Positions 109, 114, 138, and 141 each coordinate Zn(2+).

Belongs to the PyrI family. Contains catalytic and regulatory chains. It depends on Zn(2+) as a cofactor.

Involved in allosteric regulation of aspartate carbamoyltransferase. The polypeptide is Aspartate carbamoyltransferase regulatory chain (Aeromonas hydrophila subsp. hydrophila (strain ATCC 7966 / DSM 30187 / BCRC 13018 / CCUG 14551 / JCM 1027 / KCTC 2358 / NCIMB 9240 / NCTC 8049)).